We begin with the raw amino-acid sequence, 493 residues long: Cobyric acid synthase (493 aa).

Residues 246–440 enclose the GATase cobBQ-type domain; it reads PIDIAVIKMP…IHGVFDGVAF (195 aa). Cys-326 functions as the Nucleophile in the catalytic mechanism. His-432 is an active-site residue.

This sequence belongs to the CobB/CobQ family. CobQ subfamily.

It functions in the pathway cofactor biosynthesis; adenosylcobalamin biosynthesis. Functionally, catalyzes amidations at positions B, D, E, and G on adenosylcobyrinic A,C-diamide. NH(2) groups are provided by glutamine, and one molecule of ATP is hydrogenolyzed for each amidation. This Clostridium botulinum (strain Loch Maree / Type A3) protein is Cobyric acid synthase.